Reading from the N-terminus, the 249-residue chain is DNA polymerase sliding clamp 1 (249 aa).

Belongs to the PCNA family. In terms of assembly, homotrimer. The subunits circularize to form a toroid; DNA passes through its center. Replication factor C (RFC) is required to load the toroid on the DNA.

Sliding clamp subunit that acts as a moving platform for DNA processing. Responsible for tethering the catalytic subunit of DNA polymerase and other proteins to DNA during high-speed replication. This chain is DNA polymerase sliding clamp 1, found in Pyrobaculum aerophilum (strain ATCC 51768 / DSM 7523 / JCM 9630 / CIP 104966 / NBRC 100827 / IM2).